The primary structure comprises 416 residues: Gamma-glutamyl phosphate reductase (416 aa).

The protein belongs to the gamma-glutamyl phosphate reductase family.

The protein resides in the cytoplasm. It carries out the reaction L-glutamate 5-semialdehyde + phosphate + NADP(+) = L-glutamyl 5-phosphate + NADPH + H(+). It participates in amino-acid biosynthesis; L-proline biosynthesis; L-glutamate 5-semialdehyde from L-glutamate: step 2/2. Catalyzes the NADPH-dependent reduction of L-glutamate 5-phosphate into L-glutamate 5-semialdehyde and phosphate. The product spontaneously undergoes cyclization to form 1-pyrroline-5-carboxylate. In Vibrio vulnificus (strain CMCP6), this protein is Gamma-glutamyl phosphate reductase.